The sequence spans 231 residues: Phosphatidate cytidylyltransferase (231 aa).

Helical transmembrane passes span 33–53 (FVVA…LVAI), 67–87 (IMYL…LIFL), 95–115 (WLIM…MIGG), 133–153 (WSGL…ISFI), 167–187 (IYLF…DLFI), and 206–226 (HGGV…LFFI).

This sequence belongs to the CDS family.

Its subcellular location is the cell membrane. It carries out the reaction a 1,2-diacyl-sn-glycero-3-phosphate + CTP + H(+) = a CDP-1,2-diacyl-sn-glycerol + diphosphate. The protein operates within phospholipid metabolism; CDP-diacylglycerol biosynthesis; CDP-diacylglycerol from sn-glycerol 3-phosphate: step 3/3. The polypeptide is Phosphatidate cytidylyltransferase (cdsA) (Rickettsia bellii (strain RML369-C)).